Reading from the N-terminus, the 34-residue chain is MSDIN-like toxin proprotein 4 (34 aa).

The propeptide occupies 1-10; it reads MSDINATRLP. A cross-link (cyclopeptide (Val-Pro)) is located at residues 11-17; the sequence is VWIGYSP. A propeptide spanning residues 18–34 is cleaved from the precursor; the sequence is CVGDDCIALLTRGEGLC.

It belongs to the MSDIN fungal toxin family. Post-translationally, processed by the macrocyclase-peptidase enzyme POPB to yield a toxic cyclic heptapeptide. POPB first removes 10 residues from the N-terminus. Conformational trapping of the remaining peptide forces the enzyme to release this intermediate rather than proceed to macrocyclization. The enzyme rebinds the remaining peptide in a different conformation and catalyzes macrocyclization of the N-terminal 7 residues. As to expression, expressed in basidiocarps.

Probable toxin that belongs to the MSDIN-like toxin family responsible for a large number of food poisoning cases and deaths. This is MSDIN-like toxin proprotein 4 from Amanita exitialis (Guangzhou destroying angel).